Reading from the N-terminus, the 424-residue chain is Tyrosine--tRNA ligase (424 aa).

Position 37 (Y37) interacts with L-tyrosine. The 'HIGH' region signature appears at 42–51; sequence PTADSLHLGH. K144 carries the post-translational modification N6-acetyllysine. Y175 and Q179 together coordinate L-tyrosine. Positions 235-239 match the 'KMSKS' region motif; the sequence is KFGKT. K238 is a binding site for ATP. The 58-residue stretch at 357–414 folds into the S4 RNA-binding domain; it reads ADLMQALVDSELQPSRGQARKTIASNAITINGEKQSDPEYFFKEEDRLFGRFTLLRRG.

Belongs to the class-I aminoacyl-tRNA synthetase family. TyrS type 1 subfamily. In terms of assembly, homodimer.

It localises to the cytoplasm. It carries out the reaction tRNA(Tyr) + L-tyrosine + ATP = L-tyrosyl-tRNA(Tyr) + AMP + diphosphate + H(+). In terms of biological role, catalyzes the attachment of tyrosine to tRNA(Tyr) in a two-step reaction: tyrosine is first activated by ATP to form Tyr-AMP and then transferred to the acceptor end of tRNA(Tyr). The protein is Tyrosine--tRNA ligase of Escherichia coli O8 (strain IAI1).